Reading from the N-terminus, the 643-residue chain is Thread biopolymer filament subunit alpha (643 aa).

Residues 1–13 (MSISQTVSKSYTK) are compositionally biased toward polar residues. Positions 1–34 (MSISQTVSKSYTKSVSRGGQGVSYSQSSSHKVGG) are disordered. The interval 1–191 (MSISQTVSKS…PDTVQHTRIR (191 aa)) is head. Residues 14-31 (SVSRGGQGVSYSQSSSHK) are compositionally biased toward low complexity. Residues 192 to 510 (EKQDLQTLNT…KLLDSEETRI (319 aa)) form the IF rod domain. A coil 1A region spans residues 193-227 (KQDLQTLNTKFANLVDQVRTLEQHNAILKAQISMI). The segment at 228-240 (TSPSDTPEGPVNT) is linker 1. A coil 1B region spans residues 241 to 341 (AVVASTVTAT…YNARVREVQA (101 aa)). The interval 342–362 (AVTGGPTAAYSIRVDNTHQAI) is linker 12. The coil 2A stretch occupies residues 363–381 (DLTTSLQEMKTHYEVLATK). A linker 2 region spans residues 382 to 389 (SREEAFTQ). The interval 390–510 (VQPRIQEMAV…KLLDSEETRI (121 aa)) is coil 2B. The segment at 511 to 643 (SHGGGITITT…SSARSSSRIY (133 aa)) is tail. The interval 622–643 (SRAGYSASRKSYSSARSSSRIY) is disordered.

Belongs to the intermediate filament family. Coiled-coil heterodimer of an alpha and a gamma subunit. Assemble into 10 nm filaments. Forms a massive, conical, intermediate filament biopolymer of approximately 60 cm.

It localises to the secreted. Its subcellular location is the extracellular space. In terms of biological role, released extracellularly into seawater and provides physical and biological defense against invasive organism by modulation of the viscoelastic properties of mucus. The sequence is that of Thread biopolymer filament subunit alpha from Eptatretus stoutii (Pacific hagfish).